The chain runs to 204 residues: Lymphotoxin-alpha (204 aa).

The first 33 residues, 1-33 (MTPPGRLYLLRVRSAPVLLLLGLLLGLPPGAQG), serve as a signal peptide directing secretion. One can recognise a THD domain in the interval 62–204 (PAAHLIGDPS…SSVFFGAFAL (143 aa)). An N-linked (GlcNAc...) asparagine glycan is attached at Asn-95. An intrachain disulfide couples Cys-119 to Cys-155.

Belongs to the tumor necrosis factor family. As to quaternary structure, homotrimer, and heterotrimer of either two LTB and one LTA subunits or (less prevalent) two LTA and one LTB subunits. Interacts with TNFRSF14.

Its subcellular location is the secreted. It is found in the membrane. Its function is as follows. Cytokine that in its homotrimeric form binds to TNFRSF1A/TNFR1, TNFRSF1B/TNFBR and TNFRSF14/HVEM. In its heterotrimeric form with LTB binds to TNFRSF3/LTBR. Lymphotoxin is produced by lymphocytes and is cytotoxic for a wide range of tumor cells in vitro and in vivo. The chain is Lymphotoxin-alpha (LTA) from Canis lupus familiaris (Dog).